Consider the following 171-residue polypeptide: Co-chaperone protein HscB homolog (171 aa).

The J domain occupies 2 to 74 (NHFELFRLPF…ISRAEYMLSE (73 aa)).

This sequence belongs to the HscB family. As to quaternary structure, interacts with HscA and stimulates its ATPase activity.

Co-chaperone involved in the maturation of iron-sulfur cluster-containing proteins. Seems to help targeting proteins to be folded toward HscA. The polypeptide is Co-chaperone protein HscB homolog (Photobacterium profundum (strain SS9)).